A 387-amino-acid chain; its full sequence is uncharacterized protein (387 aa).

Residues 1 to 27 (MKKWMITIAMLILAGIALFVFISPLKS) form the signal peptide.

This is an uncharacterized protein from Bacillus subtilis (strain 168).